Here is a 128-residue protein sequence, read N- to C-terminus: MRHRKSGRHLSRTSSHRKAMFQNMAVSLFEHELIKTTLPKAKELRRVAEPLITLAKTDSLANRRLAFDRTRSKAIVGKLFNDLGKRYATREGGYLRILKCGFRAGDNAPMAYVELVDRAVGGEAVSAE.

This sequence belongs to the bacterial ribosomal protein bL17 family. As to quaternary structure, part of the 50S ribosomal subunit. Contacts protein L32.

This is Large ribosomal subunit protein bL17 from Pseudomonas fluorescens (strain ATCC BAA-477 / NRRL B-23932 / Pf-5).